Reading from the N-terminus, the 143-residue chain is ATP synthase F(0) complex subunit C2, mitochondrial (143 aa).

A mitochondrion-targeting transit peptide spans 1 to 68 (MYTCAKFVST…RSFQTSAISR (68 aa)). Residues 84-104 (VGVAGSGAGIGTVFGSLIIGY) form a helical membrane-spanning segment. N6,N6,N6-trimethyllysine is present on Lys111. A helical transmembrane segment spans residues 119 to 139 (ILGFALSEAMGLFCLMVAFLI).

This sequence belongs to the ATPase C chain family. In terms of assembly, F-type ATPases have 2 components, CF(1) - the catalytic core - and CF(0) - the membrane proton channel. CF(1) has five subunits: alpha(3), beta(3), gamma(1), delta(1), epsilon(1). CF(0) has three main subunits: a, b and c. Interacts with DNAJC30; interaction is direct. Post-translationally, trimethylated by ATPSCKMT at Lys-111. Methylation is required for proper incorporation of the C subunit into the ATP synthase complex and mitochondrial respiration.

The protein localises to the mitochondrion membrane. Mitochondrial membrane ATP synthase (F(1)F(0) ATP synthase or Complex V) produces ATP from ADP in the presence of a proton gradient across the membrane which is generated by electron transport complexes of the respiratory chain. F-type ATPases consist of two structural domains, F(1) - containing the extramembraneous catalytic core and F(0) - containing the membrane proton channel, linked together by a central stalk and a peripheral stalk. During catalysis, ATP synthesis in the catalytic domain of F(1) is coupled via a rotary mechanism of the central stalk subunits to proton translocation. Part of the complex F(0) domain. A homomeric c-ring of probably 10 subunits is part of the complex rotary element. The polypeptide is ATP synthase F(0) complex subunit C2, mitochondrial (Bos taurus (Bovine)).